Consider the following 1341-residue polypeptide: DNA-directed RNA polymerase subunit Rpo1N (1341 aa).

Zn(2+)-binding residues include C62, C65, C72, H75, C102, C105, C149, and C152. 3 residues coordinate Mg(2+): D918, D920, and D922.

This sequence belongs to the RNA polymerase beta' chain family. In terms of assembly, part of the RNA polymerase complex. The cofactor is Mg(2+). It depends on Zn(2+) as a cofactor. Post-translationally, this protein undergoes a protein self splicing that involves a post-translational excision of the intervening region (intein) followed by peptide ligation.

The protein localises to the cytoplasm. It carries out the reaction RNA(n) + a ribonucleoside 5'-triphosphate = RNA(n+1) + diphosphate. Its function is as follows. DNA-dependent RNA polymerase (RNAP) catalyzes the transcription of DNA into RNA using the four ribonucleoside triphosphates as substrates. Forms the clamp head domain. In Methanocaldococcus jannaschii (strain ATCC 43067 / DSM 2661 / JAL-1 / JCM 10045 / NBRC 100440) (Methanococcus jannaschii), this protein is DNA-directed RNA polymerase subunit Rpo1N.